Here is a 530-residue protein sequence, read N- to C-terminus: 2,3-bisphosphoglycerate-independent phosphoglycerate mutase (530 aa).

2 residues coordinate Mn(2+): Asp15 and Ser65. The Phosphoserine intermediate role is filled by Ser65. Substrate contacts are provided by residues His126, 155-156 (RD), Arg187, Arg193, 257-260 (RPDR), and Lys330. 5 residues coordinate Mn(2+): Asp397, His401, Asp438, His439, and His456.

It belongs to the BPG-independent phosphoglycerate mutase family. As to quaternary structure, monomer. It depends on Mn(2+) as a cofactor.

The enzyme catalyses (2R)-2-phosphoglycerate = (2R)-3-phosphoglycerate. It participates in carbohydrate degradation; glycolysis; pyruvate from D-glyceraldehyde 3-phosphate: step 3/5. In terms of biological role, catalyzes the interconversion of 2-phosphoglycerate and 3-phosphoglycerate. The sequence is that of 2,3-bisphosphoglycerate-independent phosphoglycerate mutase from Synechococcus sp. (strain JA-2-3B'a(2-13)) (Cyanobacteria bacterium Yellowstone B-Prime).